We begin with the raw amino-acid sequence, 359 residues long: NF-kappa-B inhibitor beta (359 aa).

Phosphoserine; by RPS6KA1 occurs at positions 19 and 23. ANK repeat units lie at residues Asp57–Tyr86, Leu93–Val122, and Gly126–Arg155. Residues His153–Glu194 are disordered. Residues Thr160–Thr172 are compositionally biased toward polar residues. ANK repeat units lie at residues Asp206–Lys235, Cys240–Ala269, and Gly273–Glu302. The disordered stretch occupies residues Ala298–Ala359. Phosphoserine occurs at positions 313 and 318. Over residues Ser318–Asp331 the composition is skewed to acidic residues. Pro residues predominate over residues Pro344 to Ala359.

This sequence belongs to the NF-kappa-B inhibitor family. As to quaternary structure, interacts with THRB (via ligand-binding domain). Interacts with RELA and REL. Interacts with COMMD1. Interacts with inhibitor kappa B-interacting Ras-like NKIRAS1 and NKIRAS2. Post-translationally, phosphorylated by RPS6KA1; followed by degradation. Interaction with NKIRAS1 and NKIRAS2 probably prevents phosphorylation. In terms of tissue distribution, highly expressed in testis followed by spleen.

It localises to the cytoplasm. The protein localises to the nucleus. Its function is as follows. Inhibits NF-kappa-B by complexing with and trapping it in the cytoplasm. However, the unphosphorylated form resynthesized after cell stimulation is able to bind NF-kappa-B allowing its transport to the nucleus and protecting it to further NFKBIA-dependent inactivation. Association with inhibitor kappa B-interacting NKIRAS1 and NKIRAS2 prevent its phosphorylation rendering it more resistant to degradation, explaining its slower degradation. This Mus musculus (Mouse) protein is NF-kappa-B inhibitor beta (Nfkbib).